The following is a 261-amino-acid chain: MNKRNWLLALSLSLAFSPCYADWAKLKAAASDLGAAVSETSKEVWQDVSDFSKKSWASISAWGEEAFNTAGVWTDKSIATGKEWLKAADKELNEMLNPKTAKEARIAINTMADTALIRLFNEQPSAKLLFDKAYGYAVFDSRKFSLMLHTNQGAGVAVNRKTGKHTYMKMFGAGLAAGIGGKFYQQVILFEDKARFDAFVTQGWEATSEVGVVAGKESAELTAKYNGGMAIYQIGEKGLLLDANISGSKYWIDKDLTETSR.

Positions 1 to 21 (MNKRNWLLALSLSLAFSPCYA) are cleaved as a signal peptide. The segment at 99 to 261 (KTAKEARIAI…IDKDLTETSR (163 aa)) is SYLF domain.

Its subcellular location is the secreted. The protein resides in the host. Functionally, stimulates the proliferation of insulin-producing beta cells during development in gnotobiotic zebrafish and mice. BefA is a microbiome-derived protein that traffics from the host intestinal lumen to the pancreas to act directly on pancreatic islets. In pancreas, interacts directly with host beta cells and elicits their proliferation via a mechanism of increasing membrane permeabilization. Can also permeabilize bacterial cell membranes, but does not show killing of target bacteria. The protein is Beta cell expansion factor A of Aeromonas veronii.